A 171-amino-acid polypeptide reads, in one-letter code: Adenine phosphoribosyltransferase (171 aa).

It belongs to the purine/pyrimidine phosphoribosyltransferase family. In terms of assembly, homodimer.

The protein resides in the cytoplasm. It carries out the reaction AMP + diphosphate = 5-phospho-alpha-D-ribose 1-diphosphate + adenine. It participates in purine metabolism; AMP biosynthesis via salvage pathway; AMP from adenine: step 1/1. Its function is as follows. Catalyzes a salvage reaction resulting in the formation of AMP, that is energically less costly than de novo synthesis. This Solidesulfovibrio magneticus (strain ATCC 700980 / DSM 13731 / RS-1) (Desulfovibrio magneticus) protein is Adenine phosphoribosyltransferase.